A 553-amino-acid polypeptide reads, in one-letter code: Dihydrolipoyllysine-residue acetyltransferase component of pyruvate dehydrogenase complex (553 aa).

Positions 4 to 78 constitute a Lipoyl-binding 1 domain; sequence AIEIKVPDIG…SEGSVLVMLE (75 aa). K44 carries the post-translational modification N6-lipoyllysine. A disordered region spans residues 97–118; sequence AAAAPAPAPAPAAAPAAAPAAG. One can recognise a Lipoyl-binding 2 domain in the interval 122–196; sequence TIEVKVPDIG…AEGTLLLILE (75 aa). K162 carries the post-translational modification N6-lipoyllysine. The 38-residue stretch at 250–287 folds into the Peripheral subunit-binding (PSBD) domain; that stretch reads HASPSVRKFARELGVDVSRVPGTGPKGRITQEDVQGYV. H526 is a catalytic residue.

The protein belongs to the 2-oxoacid dehydrogenase family. As to quaternary structure, forms a 24-polypeptide structural core with octahedral symmetry. (R)-lipoate serves as cofactor.

It catalyses the reaction N(6)-[(R)-dihydrolipoyl]-L-lysyl-[protein] + acetyl-CoA = N(6)-[(R)-S(8)-acetyldihydrolipoyl]-L-lysyl-[protein] + CoA. Its function is as follows. The pyruvate dehydrogenase complex catalyzes the overall conversion of pyruvate to acetyl-CoA and CO(2). It contains multiple copies of three enzymatic components: pyruvate dehydrogenase (E1), dihydrolipoamide acetyltransferase (E2) and lipoamide dehydrogenase (E3). This is Dihydrolipoyllysine-residue acetyltransferase component of pyruvate dehydrogenase complex (pdhB) from Cupriavidus necator (strain ATCC 17699 / DSM 428 / KCTC 22496 / NCIMB 10442 / H16 / Stanier 337) (Ralstonia eutropha).